An 80-amino-acid chain; its full sequence is Large ribosomal subunit protein bL31B (80 aa).

This sequence belongs to the bacterial ribosomal protein bL31 family. Type B subfamily. In terms of assembly, part of the 50S ribosomal subunit.

This Xylella fastidiosa (strain M23) protein is Large ribosomal subunit protein bL31B.